Reading from the N-terminus, the 239-residue chain is Probable transcriptional regulatory protein BCAH187_A0615 (239 aa).

Belongs to the TACO1 family. YeeN subfamily.

It is found in the cytoplasm. The chain is Probable transcriptional regulatory protein BCAH187_A0615 from Bacillus cereus (strain AH187).